The following is a 130-amino-acid chain: 3-hydroxyisobutyrate dehydrogenase, mitochondrial (130 aa).

NAD(+) is bound by residues 1-17 (TPVG…PMAK), 25-26 (LP), and asparagine 30. Lysine 43 carries the N6-acetyllysine modification. Lysine 47 carries the post-translational modification N6-acetyllysine; alternate. Position 47 is an N6-succinyllysine; alternate (lysine 47). N6-succinyllysine is present on lysine 101.

This sequence belongs to the HIBADH-related family. 3-hydroxyisobutyrate dehydrogenase subfamily. In terms of assembly, homodimer.

Its subcellular location is the mitochondrion. The enzyme catalyses 3-hydroxy-2-methylpropanoate + NAD(+) = 2-methyl-3-oxopropanoate + NADH + H(+). It functions in the pathway amino-acid degradation; L-valine degradation. The chain is 3-hydroxyisobutyrate dehydrogenase, mitochondrial from Mesocricetus auratus (Golden hamster).